We begin with the raw amino-acid sequence, 350 residues long: Glyoxylate reductase 1 (350 aa).

Position 31 is a phosphothreonine (threonine 31). Residues 173-174 (RI), 252-254 (TAR), and aspartate 278 contribute to the NAD(+) site. Arginine 254 is a catalytic residue. Glutamate 283 is an active-site residue. The active-site Proton donor is the histidine 301. 301–304 (HMGT) serves as a coordination point for NAD(+).

It belongs to the D-isomer specific 2-hydroxyacid dehydrogenase family.

The protein localises to the cytoplasm. Its subcellular location is the nucleus. The protein resides in the mitochondrion. It carries out the reaction glycolate + NAD(+) = glyoxylate + NADH + H(+). The catalysed reaction is glycolate + NADP(+) = glyoxylate + NADPH + H(+). It catalyses the reaction (R)-glycerate + NAD(+) = 3-hydroxypyruvate + NADH + H(+). The enzyme catalyses (R)-glycerate + NADP(+) = 3-hydroxypyruvate + NADPH + H(+). Its function is as follows. Glyoxylate reductase that reversibly reduces glyoxylate to glycolate, or alternatively hydroxypyruvate to D-glycerate, using either NADPH or NADH as a cosubstrate. Does not act as a hydroxyisocaproate dehydrogenase even though it also has minor activity on alpha-ketoisocaproate. The chain is Glyoxylate reductase 1 from Saccharomyces cerevisiae (strain ATCC 204508 / S288c) (Baker's yeast).